The primary structure comprises 140 residues: Lymphocyte antigen 6H (140 aa).

An N-terminal signal peptide occupies residues 1 to 25 (MLPAAMKGLGLVLLAALLCSSPAHG). The UPAR/Ly6 domain maps to 26 to 91 (LWCQDCTLTT…RHFFSDYLMG (66 aa)). 5 disulfides stabilise this stretch: C28–C52, C31–C40, C45–C73, C77–C104, and C105–C110. N36 is a glycosylation site (N-linked (GlcNAc...) asparagine).

The protein resides in the cell membrane. The protein is Lymphocyte antigen 6H (LY6H) of Bos taurus (Bovine).